The sequence spans 504 residues: Amyloid-beta A4 precursor protein-binding family B member 3 (504 aa).

The WW domain maps to 29 to 61 (TGLPPGWRKIRDAAGTYYWHVPSGSTQWQRPTW). 2 PID domains span residues 111 to 278 (EPGA…QVEL) and 283 to 438 (SQAA…RTSS).

In terms of assembly, interacts with APP (via intracellular domain). Interacts with APLP1 and APLP2 (via intracellular domain). In terms of tissue distribution, expressed predominantly in brain and testis.

The protein resides in the cytoplasm. It is found in the nucleus. Its function is as follows. May modulate the internalization of amyloid-beta precursor protein. This is Amyloid-beta A4 precursor protein-binding family B member 3 from Rattus norvegicus (Rat).